The following is a 689-amino-acid chain: MNQRPIQTATLSWNEQGTPVSEQFGDIYFSNEDGLEETHHVFLKGNGFPARFASHPQQSCIFAETGFGTGLNFLTLWRDFALFRQQSPNATLRRLHYISFEKYPLHVADLASAHARWPELASFAEQLRAQWPLPLAGCHRILLADGAITLDLWFGDVNTLLPTLDDSLNNQVDAWFLDGFAPAKNPDMWNEQLFNAMARMTRPGGTFSTFTAAGFVRRGLQQAGFNVTKVKGFGQKREMLTGTLPQQIHAPTAPWYHRPAATRCDDIAIIGGGIVSALTALALQRRGAVVTLYCADAQPAQGASGNRQGALYPLLNGKNDALETFFTSAFTFARRQYDQLLEQGIAFDHQWCGVSQLAFDDKSRGKIEKMLHTQWPVEFAEAMSREQLSELAGLDCAHDGIHYPAGGWLCPSDLTHALMMLAQQHGMTCHYQHELQRLKRIDNQWQLTFGQSQAAKHHATVILATGHRLPEWEQTHHLPLSAVRGQVSHIPTTPVLSQLQQVLCYDGYLTPVNPANQHHCIGASYQRGDIATDFRLTEQQENRERLLRCLPQVSWPQQVDVSDNQARCGVRCAIRDHLPMVGAVPDYAATLAQYQDLSRRIQHGGESEVNDIAVAPVWPELFMVGGLGSRGLCSAPLVAEILAAQMFGEPLPLDAKTLAALNPNRFWIKKLLKGRPVQTRSPATQESSR.

A tRNA (mnm(5)s(2)U34)-methyltransferase region spans residues 1–245 (MNQRPIQTAT…KREMLTGTLP (245 aa)). An FAD-dependent cmnm(5)s(2)U34 oxidoreductase region spans residues 270–689 (IGGGIVSALT…RSPATQESSR (420 aa)).

This sequence in the N-terminal section; belongs to the methyltransferase superfamily. tRNA (mnm(5)s(2)U34)-methyltransferase family. It in the C-terminal section; belongs to the DAO family. FAD is required as a cofactor.

It localises to the cytoplasm. The enzyme catalyses 5-aminomethyl-2-thiouridine(34) in tRNA + S-adenosyl-L-methionine = 5-methylaminomethyl-2-thiouridine(34) in tRNA + S-adenosyl-L-homocysteine + H(+). Functionally, catalyzes the last two steps in the biosynthesis of 5-methylaminomethyl-2-thiouridine (mnm(5)s(2)U) at the wobble position (U34) in tRNA. Catalyzes the FAD-dependent demodification of cmnm(5)s(2)U34 to nm(5)s(2)U34, followed by the transfer of a methyl group from S-adenosyl-L-methionine to nm(5)s(2)U34, to form mnm(5)s(2)U34. The protein is tRNA 5-methylaminomethyl-2-thiouridine biosynthesis bifunctional protein MnmC of Yersinia pseudotuberculosis serotype I (strain IP32953).